Reading from the N-terminus, the 98-residue chain is Integration host factor subunit alpha (98 aa).

The protein belongs to the bacterial histone-like protein family. As to quaternary structure, heterodimer of an alpha and a beta chain.

This protein is one of the two subunits of integration host factor, a specific DNA-binding protein that functions in genetic recombination as well as in transcriptional and translational control. The chain is Integration host factor subunit alpha from Acinetobacter baumannii (strain AB307-0294).